The following is a 1482-amino-acid chain: MIERGKFRSLTLVNWNGFFARTFDLDELVTTLSGGNGAGKSTTMAAFVTALIPDLTLLHFRNTTEAGATSGSRDKGLHGKLRAGVCYSVLDVINSRHQRVVVGVRLQQVAGRDRKVDIKPFAIQGLPTSILPTQLLTETLNDRQARVVSLNELKDKLEAMEGVQFKQFNSITEYHSLMFDLGVVARRLRSASDRSKYYRLIEASLYGGISSTITRSLRDYLLPENSGVRKAFQDMEAALRENRMTLEAIRVTQSDRDLFKHLISEATNYVAADYMRHANERRIHLDKALEYRRDLFTSRSQLAAEQYKHVDMARELQEHNGAEGDLEADYQAASDHLNLVQTALRQQEKIERYEADLDELQIRLEEQNEVVAEAVDRQEENEARAEAAELEVDELKSQLADYQQALDVQQTRAIQYNQALQALERAKALCHLPDLTPESADEWLETFQAKEQEATEKMLSLEQKMSVAQTAHSQFEQAYQLVAAINGPLARNEAWDVARELLRDGVNQRHQAEQAQGLRSRLNELEQRLREQQDAERQLAEFCKRQGKRYDIDDLETLHQELEARIASLADSVSNAQEQRMALRQELEQLQSRTQTLMRRAPVWLAAQNSLNQLCEQSGEQFASGQEVTEYLQQLLEREREAIVERDEVGARKRAIDEEIERLSQPGGSEDPRLNALAERFGGVLLSEIYDDVSLDDAPYFSALYGPSRHAIVVPDLSRVAEQLEGLEDCPEDLYLIEGDPQSFDDSVFSVDELEKAVVVKIADRQWRYSRFPSLPLFGRAARENRIETLHAERESLSERFATLSFDVQKTQRLHQAFSRFIGSHLAVAFEDDPEEEIRKLNSRRGELERALSAHESDNQQNRVQYEQAKEGVSALNRLLPRLNLLADDTLADRVDEIQERLDEAQEAARFIQQYGNQLAKLEPIVSVLQSDPEQFEQLKEDYAYAQQTQRDARQQAFALAEVVQRRAHFSYSDSAEMLSGNSDLNEKLRQRLEQAESERSRARDAMRAHAAQLSQYNQVLASLKSSYDTKKELLNDLYKELQDIGVRADAGAEERARARRDELHMQLSNNRSRRNQLEKALTFCEAEMDNLTRKLRKLERDYCEMREQVVTAKAGWCAVMRLVKDNGVERRLHRRELAYLSADELRSMSDKALGALRLAVADNEHLRDVLRISEDPKRPERKIQFFVAVYQHLRERIRQDIIRTDDPVEAIEQMEIELSRLTEELTNREQKLAISSRSVANIIRKTIQREQNRIRMLNQGLQSVSFGQVNSVRLNVNVRETHSMLLDVLSEQHEQHQDLFNSNRLTFSEALAKLYQRLNPQIDMGQRTPQTIGEELLDYRNYLEMEVEVNRGSDGWLRAESGALSTGEAIGTGMSILVMVVQSWEDESRRLRGKDISPCRLLFLDEAARLDARSIATLFELCERLEMQLIIAAPENISPEKGTTYKLVRKVFNNHEHVHVVGLRGFAAPLPEALPGTADAS.

34–41 contacts ATP; the sequence is GGNGAGKS. Coiled-coil stretches lie at residues 326–472, 507–602, 780–805, 832–1110, and 1209–1265; these read LEAD…QTAH, NQRH…RRAP, RAARENRIETLHAERESLSERFATLS, DDPE…REQV, and VEAI…LQSV. The flexible hinge stretch occupies residues 666–783; it reads PGGSEDPRLN…SLPLFGRAAR (118 aa).

It belongs to the SMC family. MukB subfamily. In terms of assembly, homodimerization via its hinge domain. Binds to DNA via its C-terminal region. Interacts, and probably forms a ternary complex, with MukE and MukF via its C-terminal region. The complex formation is stimulated by calcium or magnesium. Interacts with tubulin-related protein FtsZ.

It is found in the cytoplasm. The protein localises to the nucleoid. Plays a central role in chromosome condensation, segregation and cell cycle progression. Functions as a homodimer, which is essential for chromosome partition. Involved in negative DNA supercoiling in vivo, and by this means organize and compact chromosomes. May achieve or facilitate chromosome segregation by condensation DNA from both sides of a centrally located replisome during cell division. The sequence is that of Chromosome partition protein MukB from Klebsiella pneumoniae subsp. pneumoniae (strain ATCC 700721 / MGH 78578).